The primary structure comprises 128 residues: Small ribosomal subunit protein uS11 (128 aa).

It belongs to the universal ribosomal protein uS11 family. In terms of assembly, part of the 30S ribosomal subunit. Interacts with proteins S7 and S18. Binds to IF-3.

Located on the platform of the 30S subunit, it bridges several disparate RNA helices of the 16S rRNA. Forms part of the Shine-Dalgarno cleft in the 70S ribosome. The polypeptide is Small ribosomal subunit protein uS11 (Acinetobacter baylyi (strain ATCC 33305 / BD413 / ADP1)).